The chain runs to 273 residues: Phosphate import ATP-binding protein PstB (273 aa).

An ABC transporter domain is found at 19–258; that stretch reads LSLQNVTISY…FNDTDKIFNA (240 aa). Position 51 to 58 (51 to 58) interacts with ATP; the sequence is GPSGCGKS.

This sequence belongs to the ABC transporter superfamily. Phosphate importer (TC 3.A.1.7) family. In terms of assembly, the complex is composed of two ATP-binding proteins (PstB), two transmembrane proteins (PstC and PstA) and a solute-binding protein (PstS).

Its subcellular location is the cell inner membrane. It carries out the reaction phosphate(out) + ATP + H2O = ADP + 2 phosphate(in) + H(+). Its function is as follows. Part of the ABC transporter complex PstSACB involved in phosphate import. Responsible for energy coupling to the transport system. In Synechococcus sp. (strain CC9605), this protein is Phosphate import ATP-binding protein PstB.